Reading from the N-terminus, the 889-residue chain is TATA box-binding protein-associated factor RNA polymerase I subunit B (889 aa).

The segment at 1-33 (MAPETNEKCKACGGFNFSMIDGFKYCDRCGTLL) adopts an RRN7-type zinc-finger fold. The Zn(2+) site is built by C9, C12, C26, and C29. A B-reader region spans residues 35–101 (NFEELEAEEG…DFFSRQALKN (67 aa)). A B-linker region spans residues 102–113 (DELAFPHESTPD). The N-terminal cyclin fold stretch occupies residues 114–351 (YLYRLGLRLA…SAKEQETKEA (238 aa)). A disordered region spans residues 229 to 253 (NLDLDSEEDEEEEENPNLNKSMENL). Over residues 230-243 (LDLDSEEDEEEEEN) the composition is skewed to acidic residues. The C-terminal cyclin fold stretch occupies residues 352–510 (MTKVDYAEPY…LLVFRLTFDI (159 aa)).

The protein belongs to the RRN7/TAF1B family.

It localises to the nucleus. The protein localises to the nucleolus. Functionally, component of RNA polymerase I core factor complex that acts as a GTF2B/TFIIB-like factor and plays a key role in multiple steps during transcription initiation such as pre-initiation complex (PIC) assembly and postpolymerase recruitment events in polymerase I (Pol I) transcription. Binds rDNA promoters and plays a role in Pol I recruitment. This is TATA box-binding protein-associated factor RNA polymerase I subunit B from Caenorhabditis briggsae.